The sequence spans 117 residues: DNA-directed RNA polymerase subunit omega (117 aa).

Belongs to the RNA polymerase subunit omega family. As to quaternary structure, the RNAP catalytic core consists of 2 alpha, 1 beta, 1 beta' and 1 omega subunit. When a sigma factor is associated with the core the holoenzyme is formed, which can initiate transcription.

It catalyses the reaction RNA(n) + a ribonucleoside 5'-triphosphate = RNA(n+1) + diphosphate. In terms of biological role, promotes RNA polymerase assembly. Latches the N- and C-terminal regions of the beta' subunit thereby facilitating its interaction with the beta and alpha subunits. This is DNA-directed RNA polymerase subunit omega from Roseobacter denitrificans (strain ATCC 33942 / OCh 114) (Erythrobacter sp. (strain OCh 114)).